Consider the following 469-residue polypeptide: UDP-N-acetylmuramate--L-alanine ligase (469 aa).

Residue 122–128 (GTHGKTT) participates in ATP binding.

It belongs to the MurCDEF family.

It is found in the cytoplasm. The enzyme catalyses UDP-N-acetyl-alpha-D-muramate + L-alanine + ATP = UDP-N-acetyl-alpha-D-muramoyl-L-alanine + ADP + phosphate + H(+). It participates in cell wall biogenesis; peptidoglycan biosynthesis. In terms of biological role, cell wall formation. The protein is UDP-N-acetylmuramate--L-alanine ligase of Legionella pneumophila (strain Lens).